A 121-amino-acid polypeptide reads, in one-letter code: Immunoglobulin kappa variable 2-40 (121 aa).

The signal sequence occupies residues 1 to 19; that stretch reads MRLPAQLLGLLMLWVPGSS. The Ig-like domain maps to 20–121; the sequence is EDIVMTQTPL…YYCMQRIEFP (102 aa). The interval 21–43 is framework-1; the sequence is DIVMTQTPLSLPVTPGEPASISC. Cysteines 43 and 114 form a disulfide. Residues 44-60 form a complementarity-determining-1 region; it reads RSSQSLLDSDDGNTYLD. Positions 61 to 75 are framework-2; sequence WYLQKPGQSPQLLIY. The tract at residues 76–82 is complementarity-determining-2; that stretch reads TLSYRAS. The tract at residues 83–114 is framework-3; it reads GVPDRFSGSGSGTDFTLKISRVEAEDVGVYYC. Residues 115–121 form a complementarity-determining-3 region; the sequence is MQRIEFP.

Immunoglobulins are composed of two identical heavy chains and two identical light chains; disulfide-linked.

Its subcellular location is the secreted. It localises to the cell membrane. Its function is as follows. V region of the variable domain of immunoglobulin light chains that participates in the antigen recognition. Immunoglobulins, also known as antibodies, are membrane-bound or secreted glycoproteins produced by B lymphocytes. In the recognition phase of humoral immunity, the membrane-bound immunoglobulins serve as receptors which, upon binding of a specific antigen, trigger the clonal expansion and differentiation of B lymphocytes into immunoglobulins-secreting plasma cells. Secreted immunoglobulins mediate the effector phase of humoral immunity, which results in the elimination of bound antigens. The antigen binding site is formed by the variable domain of one heavy chain, together with that of its associated light chain. Thus, each immunoglobulin has two antigen binding sites with remarkable affinity for a particular antigen. The variable domains are assembled by a process called V-(D)-J rearrangement and can then be subjected to somatic hypermutations which, after exposure to antigen and selection, allow affinity maturation for a particular antigen. This chain is Immunoglobulin kappa variable 2-40, found in Homo sapiens (Human).